Reading from the N-terminus, the 145-residue chain is Maximins 3/H3 type 1 (145 aa).

An N-terminal signal peptide occupies residues 1–18 (MNFKYIVAVSFLIASAYA). 2 consecutive propeptides follow at residues 19 to 43 (RSVQ…LREI) and 74 to 124 (RIAE…KEKR). Isoleucine 144 bears the Isoleucine amide mark.

This sequence belongs to the bombinin family. In terms of tissue distribution, expressed by the skin glands.

The protein resides in the secreted. Maximin-3 shows antibacterial activity against both Gram-positive and Gram-negative bacteria. It also shows antimicrobial activity against the fungus C.albicans, but not against A.flavus nor P.uticale. It has little hemolytic activity. It possess a significant cytotoxicity against tumor cell lines. It possess a significant anti-HIV activity. It shows high spermicidal activity. Its function is as follows. Maximin-H3 shows antibacterial activity against both Gram-positive and Gram-negative bacteria. It also shows antimicrobial activity against the fungus C.albicans. Shows strong hemolytic activity. The protein is Maximins 3/H3 type 1 of Bombina maxima (Giant fire-bellied toad).